The chain runs to 142 residues: Large ribosomal subunit protein uL11 (142 aa).

This sequence belongs to the universal ribosomal protein uL11 family. As to quaternary structure, part of the ribosomal stalk of the 50S ribosomal subunit. Interacts with L10 and the large rRNA to form the base of the stalk. L10 forms an elongated spine to which L12 dimers bind in a sequential fashion forming a multimeric L10(L12)X complex. One or more lysine residues are methylated.

Its function is as follows. Forms part of the ribosomal stalk which helps the ribosome interact with GTP-bound translation factors. The polypeptide is Large ribosomal subunit protein uL11 (Xanthomonas oryzae pv. oryzae (strain MAFF 311018)).